Reading from the N-terminus, the 475-residue chain is E3 ubiquitin-protein ligase TRIM21 (475 aa).

The segment at 16 to 55 (CPICLDPFVEPVSIECGHSFCQECISQVGKGGGSVCPVCR) adopts an RING-type zinc-finger fold. Zn(2+)-binding residues include Cys-92, His-95, Cys-114, and His-120. The B box-type zinc-finger motif lies at 92–123 (CAVHGERLHLFCEKDGKALCWVCAQSRKHRDH). Residues 128–238 (LEEAAQEYQE…ISELDRRCHS (111 aa)) adopt a coiled-coil conformation. Ser-266 is modified (phosphoserine). Positions 268-465 (ELRSVCHVPG…NTAPLTLCPL (198 aa)) constitute a B30.2/SPRY domain.

Belongs to the TRIM/RBCC family. Homotrimer. Interacts (via C-terminus) with IRF8 (via C-terminus). Component of a SCF(SKP2)-like complex containing CUL1, SKP1, TRIM21 and SKP2. Interacts with CALR, CUL1, FBXW11, HSPA5, IKBKB, IRF3, SKP1 and VCP. Interacts with SKP2; the interaction with SKP2 does not depend on an intact F-box domain. Interacts (via N-terminus and C-terminus) with DCP2 (via N-terminus and C-terminus). Interacts with ULK1, BECN1 and with ATG8 family members, including GABARAP, GABARAPL1, GABARAPL2 and MAP1LC3C/LC3C. Interacts with TRIM21 and SQSTM1/sequestosome 1. Interacts with IRF3. Interacts (via the SPRY domain) with NMI (via coiled-coil domain); the interaction promotes 'Lys-63'-linked ubiquitination of NMI. Interacts with IFI35 and NMI; the interaction facilitates NMI-IFI35 complex formation. As to quaternary structure, (Microbial infection) Interacts (via B30.2/SPRY domain) with severe fever with thrombocytopenia syndrome virus (SFTSV) NSs; this interaction activates NFE2L2-mediated transcriptional activation of antioxidant genes. Autoubiquitinated; does not lead to its proteasomal degradation. Deubiquitinated by USP4; leading to its stabilization. Isoform 1 and isoform 2 are expressed in fetal and adult heart and fetal lung.

It is found in the cytoplasm. Its subcellular location is the cytoplasmic vesicle. The protein resides in the autophagosome. The protein localises to the nucleus. It localises to the P-body. It is found in the stress granule. The catalysed reaction is S-ubiquitinyl-[E2 ubiquitin-conjugating enzyme]-L-cysteine + [acceptor protein]-L-lysine = [E2 ubiquitin-conjugating enzyme]-L-cysteine + N(6)-ubiquitinyl-[acceptor protein]-L-lysine.. The protein operates within protein modification; protein ubiquitination. In terms of biological role, E3 ubiquitin-protein ligase whose activity is dependent on E2 enzymes, UBE2D1, UBE2D2, UBE2E1 and UBE2E2. Forms a ubiquitin ligase complex in cooperation with the E2 UBE2D2 that is used not only for the ubiquitination of USP4 and IKBKB but also for its self-ubiquitination. Component of cullin-RING-based SCF (SKP1-CUL1-F-box protein) E3 ubiquitin-protein ligase complexes such as SCF(SKP2)-like complexes. A TRIM21-containing SCF(SKP2)-like complex is shown to mediate ubiquitination of CDKN1B ('Thr-187' phosphorylated-form), thereby promoting its degradation by the proteasome. Monoubiquitinates IKBKB that will negatively regulates Tax-induced NF-kappa-B signaling. Negatively regulates IFN-beta production post-pathogen recognition by catalyzing polyubiquitin-mediated degradation of IRF3. Mediates the ubiquitin-mediated proteasomal degradation of IgG1 heavy chain, which is linked to the VCP-mediated ER-associated degradation (ERAD) pathway. Promotes IRF8 ubiquitination, which enhanced the ability of IRF8 to stimulate cytokine genes transcription in macrophages. Plays a role in the regulation of the cell cycle progression. Enhances the decapping activity of DCP2. Exists as a ribonucleoprotein particle present in all mammalian cells studied and composed of a single polypeptide and one of four small RNA molecules. At least two isoforms are present in nucleated and red blood cells, and tissue specific differences in RO/SSA proteins have been identified. The common feature of these proteins is their ability to bind HY RNAs.2. Involved in the regulation of innate immunity and the inflammatory response in response to IFNG/IFN-gamma. Organizes autophagic machinery by serving as a platform for the assembly of ULK1, Beclin 1/BECN1 and ATG8 family members and recognizes specific autophagy targets, thus coordinating target recognition with assembly of the autophagic apparatus and initiation of autophagy. Also regulates autophagy through FIP200/RB1CC1 ubiquitination and subsequent decreased protein stability. Represses the innate antiviral response by facilitating the formation of the NMI-IFI35 complex through 'Lys-63'-linked ubiquitination of NMI. During viral infection, promotes cell pyroptosis by mediating 'Lys-6'-linked ubiquitination of ISG12a/IFI27, facilitating its translocation into the mitochondria and subsequent CASP3 activation. When up-regulated through the IFN/JAK/STAT signaling pathway, promotes 'Lys-27'-linked ubiquitination of MAVS, leading to the recruitment of TBK1 and up-regulation of innate immunity. Mediates 'Lys-63'-linked polyubiquitination of G3BP1 in response to heat shock, leading to stress granule disassembly. The chain is E3 ubiquitin-protein ligase TRIM21 from Homo sapiens (Human).